Reading from the N-terminus, the 255-residue chain is Probable UDP-N-acetylglucosamine pyrophosphorylase (255 aa).

It carries out the reaction N-acetyl-alpha-D-glucosamine 1-phosphate + UTP + H(+) = UDP-N-acetyl-alpha-D-glucosamine + diphosphate. Its pathway is nucleotide-sugar biosynthesis; UDP-N-acetyl-alpha-D-glucosamine biosynthesis; UDP-N-acetyl-alpha-D-glucosamine from N-acetyl-alpha-D-glucosamine 1-phosphate: step 1/1. In Acanthamoeba polyphaga (Amoeba), this protein is Probable UDP-N-acetylglucosamine pyrophosphorylase.